We begin with the raw amino-acid sequence, 471 residues long: Ribulose bisphosphate carboxylase large chain 2 (471 aa).

Substrate is bound by residues Asn116 and Thr166. Lys168 (proton acceptor) is an active-site residue. Residue Lys170 coordinates substrate. Residues Lys194, Asp196, and Glu197 each contribute to the Mg(2+) site. An N6-carboxylysine modification is found at Lys194. His287 (proton acceptor) is an active-site residue. The substrate site is built by Arg288, His320, and Ser372.

Belongs to the RuBisCO large chain family. Type I subfamily. Heterohexadecamer of 8 large chains and 8 small chains; disulfide-linked. The disulfide link is formed within the large subunit homodimers. Mg(2+) is required as a cofactor. The disulfide bond which can form in the large chain dimeric partners within the hexadecamer appears to be associated with oxidative stress and protein turnover.

The catalysed reaction is 2 (2R)-3-phosphoglycerate + 2 H(+) = D-ribulose 1,5-bisphosphate + CO2 + H2O. It catalyses the reaction D-ribulose 1,5-bisphosphate + O2 = 2-phosphoglycolate + (2R)-3-phosphoglycerate + 2 H(+). RuBisCO catalyzes two reactions: the carboxylation of D-ribulose 1,5-bisphosphate, the primary event in carbon dioxide fixation, as well as the oxidative fragmentation of the pentose substrate. Both reactions occur simultaneously and in competition at the same active site. This Allochromatium vinosum (strain ATCC 17899 / DSM 180 / NBRC 103801 / NCIMB 10441 / D) (Chromatium vinosum) protein is Ribulose bisphosphate carboxylase large chain 2.